We begin with the raw amino-acid sequence, 646 residues long: Protein SENSITIVE TO UV 2 (646 aa).

The interval 42–70 is disordered; it reads PAPPPSTKISSSLSHPMQLQSSAGQQRKQ. Positions 48–70 are enriched in polar residues; it reads TKISSSLSHPMQLQSSAGQQRKQ. The Nuclear localization signal motif lies at 119-126; that stretch reads NRRCDSEK. The stretch at 123 to 157 forms a coiled coil; that stretch reads DSEKDLEIDRLKKELERVSKQLLDVEQECSQLKKG. A Phosphatase tensin-type domain is found at 376-646; that stretch reads KRTEQDVKQE…VFAFLGDNTI (271 aa).

The protein belongs to the serpin family. Forms multimers through the coiled-coil domain. Post-translationally, probably phosphorylated by ATR. In terms of tissue distribution, accumulates throughout the root tip.

It localises to the nucleus. Its subcellular location is the cytoplasm. Required for tolerance to DNA-damaging and cross-linking agents such as UVB irradiation, gamma-radiation, aphidicolin, ionizing radiation and hydroxyurea (HU), cisplatin (CDDP) and mitomycin C (MMC). Involved in cell-cycle G2/M arrest in response to DNA damage. Required for aluminum-dependent gene regulation and root growth inhibition in an ATR-dependent manner by halting cell cycle progression and triggering loss of the quiescent center (QC). The sequence is that of Protein SENSITIVE TO UV 2 from Arabidopsis thaliana (Mouse-ear cress).